We begin with the raw amino-acid sequence, 322 residues long: Cysteine protease YopT (322 aa).

Catalysis depends on residues Cys139, His258, and Asp274.

It belongs to the peptidase C58 family. Interacts with human ARHA.

The protein localises to the secreted. Its function is as follows. Cysteine protease, which is translocated into infected cells and plays a central role in pathogenesis by cleaving the C-terminus end of the human small GTPase RhoA/ARHA, a regulator of cytoskeleton. Once cleaved, ARHA loses its lipid modification, and is released from the cell membrane, leading to the subsequent disruption of actin cytoskeleton of the host cell. This is Cysteine protease YopT (yopT) from Yersinia pestis.